The sequence spans 491 residues: Delayed-rectifier potassium channel regulatory subunit KCNS3 (491 aa).

At 1–182 (MVFGEFFHRP…IRMENPAYCL (182 aa)) the chain is on the cytoplasmic side. A helical membrane pass occupies residues 183 to 204 (SAKLIAISSLSVVLASIVAMCV). Topologically, residues 205 to 220 (HSMSEFQNEDGEVDDP) are extracellular. A helical transmembrane segment spans residues 221-243 (VLEGVEIACIAWFTGELAIRLVA). Residues 244–254 (APSQKKFWKNP) lie on the Cytoplasmic side of the membrane. A helical membrane pass occupies residues 255 to 275 (LNIIDFVSIIPFYATLAVDTK). Residues 276–285 (EEESEDIENM) are Extracellular-facing. A helical; Voltage-sensor transmembrane segment spans residues 286 to 306 (GKVVQILRLMRIFRILKLARH). Residues 307 to 321 (SVGLRSLGATLRHSY) are Cytoplasmic-facing. Residues 322 to 343 (HEVGLLLLFLSVGISIFSVLIY) form a helical membrane-spanning segment. The Extracellular portion of the chain corresponds to 344–357 (SVEKDEHKSSLTSI). The segment at residues 358 to 369 (PICWWWATISMT) is an intramembrane region (helical). The short motif at 370 to 375 (TVGYGD) is the Selectivity filter element. An intramembrane segment occupies 370 to 377 (TVGYGDTH). Residues 378-384 (PVTLAGK) lie on the Extracellular side of the membrane. The helical transmembrane segment at 385-413 (IIASTCIICGILVVALPITIIFNKFSKYY) threads the bilayer. The Cytoplasmic portion of the chain corresponds to 414–491 (QKQKDMEVDQ…TASLENCTGK (78 aa)).

The protein belongs to the potassium channel family. S (TC 1.A.1.2) subfamily. Kv9.3/KCNS3 sub-subfamily. In terms of assembly, heterotetramer with KCNB1. Does not form homomultimers.

It localises to the cell membrane. Functionally, potassium channel regulatory subunit that modulates the delayed rectifier potassium channel activity of KCNB1 by namely slowing down the deactivation and inactivation time constants. While it does not form functional channel on its own, it can form functional heterotetrameric channels with KCNB1. In Mus musculus (Mouse), this protein is Delayed-rectifier potassium channel regulatory subunit KCNS3.